Here is a 120-residue protein sequence, read N- to C-terminus: Movement protein TGB2 (120 aa).

At 1–8 (MPFAQPPD) the chain is on the cytoplasmic side. Residues 9–29 (YSKSVFPIAVGIAVAVVLFTL) traverse the membrane as a helical segment. The Lumenal portion of the chain corresponds to 30–71 (TRSTLPQVGDNIHNLPHGGNYQDGTKRISYCGPRDSFPSSSL). A helical transmembrane segment spans residues 72–92 (ISSGTPMIIGIIIFLIFAIYV). At 93–120 (SEKWSRSGSRRCSCCVPGAPACTATVHE) the chain is on the cytoplasmic side.

The protein belongs to the Tymovirales TGBp2 protein family.

Its subcellular location is the host endoplasmic reticulum membrane. Functionally, plays a role in viral cell-to-cell propagation, by facilitating genome transport to neighboring plant cells through plasmosdesmata,. The chain is Movement protein TGB2 from Crataegus (hawthorn).